Here is a 266-residue protein sequence, read N- to C-terminus: Apolipoprotein A-I (266 aa).

An N-terminal signal peptide occupies residues 1–18 (MKAVVLTLAVLFLTGSQA). Repeat copies occupy residues 67 to 88 (LKLL…EQIG) and 89 to 110 (PVTQ…QEMN). The segment at 67–266 (LKLLDNWDSL…DEATKKLNSQ (200 aa)) is 10 X approximate tandem repeats. M109 carries the post-translational modification Methionine sulfoxide. Residues 111 to 121 (KDLEEVKKKVQ) form a 3; half-length repeat. Repeat copies occupy residues 122-143 (PYLD…QKVA), 144-165 (PLGA…EKLS), 166-187 (PLGE…AQLA), 188-209 (PYGE…EGGG), and 210-231 (AALT…EKAK). The 9; half-length repeat unit spans residues 232–242 (PALEDLRQGLL). Residues 243-266 (PVLENFRVSLLAAVDEATKKLNSQ) form repeat 10.

Belongs to the apolipoprotein A1/A4/E family. As to quaternary structure, homodimer. Interacts with APOA1BP and CLU. Component of a sperm activating protein complex (SPAP), consisting of APOA1, an immunoglobulin heavy chain, an immunoglobulin light chain and albumin. Interacts with NDRG1. Interacts with SCGB3A2. Interacts with NAXE and YJEFN3. Post-translationally, glycosylated. Palmitoylated. In terms of processing, phosphorylation sites are present in the extracellular medium.

It is found in the secreted. In terms of biological role, participates in the reverse transport of cholesterol from tissues to the liver for excretion by promoting cholesterol efflux from tissues and by acting as a cofactor for the lecithin cholesterol acyltransferase (LCAT). As part of the SPAP complex, activates spermatozoa motility. This chain is Apolipoprotein A-I (APOA1), found in Leptonychotes weddellii (Weddell seal).